A 357-amino-acid polypeptide reads, in one-letter code: MAAPVQTIDVLLAEHADLERALADPELHSRPDEARKAGRRFARLARIVATYRKLVAAREDLETAHELAATDESFVAEAAELEARVAELDSQLTDMLAPRDPHDADDIVLEVKSGEGGEESALFAADLARMYIRYAERHGWTVTVLGETTSDLGGYRDATLAIASKGDTADGVWSRMKFEGGVHRVQRVPVTESQGRVHTSAAGVLVYPEPEEVGEVQIDESDLRIDVYRSSGKGGQGVNTTDSAVRITHLPTGIVVTCQNERSQLQNKIRAMQVLGARLQAIAEERAMADASADRASQIRTVDRSERIRTYNFPENRVTDHRIGYKSHNLDQVLDGDLDALFDALAAADKQARLQQS.

Glutamine 236 bears the N5-methylglutamine mark.

The protein belongs to the prokaryotic/mitochondrial release factor family. Post-translationally, methylated by PrmC. Methylation increases the termination efficiency of RF1.

Its subcellular location is the cytoplasm. In terms of biological role, peptide chain release factor 1 directs the termination of translation in response to the peptide chain termination codons UAG and UAA. The sequence is that of Peptide chain release factor 1 from Mycobacterium ulcerans (strain Agy99).